The sequence spans 508 residues: GMP synthase [glutamine-hydrolyzing] (508 aa).

Residues 1–189 (MILVLDFGSQ…ALLVCGCEKT (189 aa)) form the Glutamine amidotransferase type-1 domain. The Nucleophile role is filled by Cys-78. Residues His-163 and Glu-165 contribute to the active site. A GMPS ATP-PPase domain is found at 190–383 (WGMQHFAQRE…LGVSQDFLMR (194 aa)). ATP is bound at residue 217–223 (SGGVDST).

Homodimer.

It catalyses the reaction XMP + L-glutamine + ATP + H2O = GMP + L-glutamate + AMP + diphosphate + 2 H(+). The protein operates within purine metabolism; GMP biosynthesis; GMP from XMP (L-Gln route): step 1/1. Functionally, catalyzes the synthesis of GMP from XMP. The polypeptide is GMP synthase [glutamine-hydrolyzing] (guaA) (Helicobacter pylori (strain J99 / ATCC 700824) (Campylobacter pylori J99)).